We begin with the raw amino-acid sequence, 1855 residues long: Collagen alpha-1(XXVII) chain (1855 aa).

Residues 1–48 (MGLARATAGLGPCCPPAPALLGAGLRWGGFLFAWILVSFSCHLASTQG) form the signal peptide. Residues 49–618 (APEDVDVLQR…PEPTPFLMLM (570 aa)) constitute a propeptide, N-terminal propeptide. In terms of domain architecture, Laminin G-like spans 81 to 246 (PSGFIFTQRA…NYCAHLRERC (166 aa)). N-linked (GlcNAc...) asparagine glycans are attached at residues Asn-281 and Asn-349. Disordered stretches follow at residues 317 to 428 (DVSK…SATV), 511 to 580 (PPLG…SQLS), 617 to 787 (LMGP…GFPG), and 838 to 1617 (GGVG…HPVQ). Polar residues-rich tracts occupy residues 382 to 427 (LSVT…SSAT) and 520 to 532 (MMPS…STPA). Residues 563–573 (TARDASPRDLT) show a composition bias toward basic and acidic residues. Collagen-like domains follow at residues 619 to 673 (GPPG…GDPG), 682 to 741 (GAKG…PGPV), 751 to 810 (GYIG…PGPP), 826 to 885 (GYPG…PGPM), 886 to 945 (GKAG…EGPM), 946 to 1005 (GPPG…VGEK), 1006 to 1047 (GDRG…PGSR), 1048 to 1105 (GLPG…GAKG), 1108 to 1155 (GIPG…PGLP), 1156 to 1215 (GDSG…KGQE), 1216 to 1275 (GLKG…PGTP), 1276 to 1330 (GPKG…GEDG), and 1334 to 1393 (GAPG…KGSK). The tract at residues 619–1612 (GPPGSKGDCG…RGRPGPPGPP (994 aa)) is triple-helical region. The span at 630–663 (PGPPGLPGLPGSPGPRGPRGPPGPFGNPGLPGPP) shows a compositional bias: pro residues. Residues 708–728 (PGAAGHPGEQGQPGPEGSPGA) show a composition bias toward low complexity. The span at 905 to 918 (FPGDIGPPGDNGPE) shows a compositional bias: low complexity. Over residues 1027 to 1036 (GTPGGVGDPG) the composition is skewed to gly residues. Composition is skewed to low complexity over residues 1083–1095 (RGRP…QGAA), 1121–1131 (LPGEPGSQGPQ), and 1161–1176 (KGDL…QGLI). Composition is skewed to basic and acidic residues over residues 1196 to 1221 (LKGD…KGEE), 1320 to 1332 (KGEK…DGKT), and 1344 to 1354 (PVGDRGDRGEP). 2 stretches are compositionally biased toward low complexity: residues 1369-1378 (RGEPGQQGQP) and 1404-1431 (KAGA…RQGP). 3 Collagen-like domains span residues 1433-1492 (GMAG…SGLP), 1493-1552 (GQLG…KGIQ), and 1553-1612 (GPRG…PGPP). Positions 1566–1581 (IIGPPGMLGPSGLPGP) are enriched in low complexity. A compositionally biased stretch (pro residues) spans 1597–1614 (RGPPGPRGRPGPPGPPWH). The propeptide at 1616–1855 (VQFQQDDLEA…RLEVGPACFL (240 aa)) is C-terminal propeptide. The 201-residue stretch at 1655–1855 (GEIFKTLHYL…RLEVGPACFL (201 aa)) folds into the Fibrillar collagen NC1 domain. 3 disulfides stabilise this stretch: Cys-1685-Cys-1717, Cys-1726-Cys-1853, and Cys-1762-Cys-1806. Ca(2+) contacts are provided by Asp-1703, Asn-1705, Cys-1708, and Asp-1711. Asn-1764 carries an N-linked (GlcNAc...) asparagine glycan.

The protein belongs to the fibrillar collagen family.

It is found in the secreted. It localises to the extracellular space. Its subcellular location is the extracellular matrix. Its function is as follows. Plays a role during the calcification of cartilage and the transition of cartilage to bone. The chain is Collagen alpha-1(XXVII) chain (Col27a1) from Rattus norvegicus (Rat).